A 530-amino-acid polypeptide reads, in one-letter code: UDP-glucuronosyltransferase 2A3 (530 aa).

Positions 1 to 23 are cleaved as a signal peptide; sequence MAPGKLASAVLLLLLCCAGSGFC. The Extracellular segment spans residues 24–494; it reads GKVLVWPCEM…SWFQYHSLDV (471 aa). N-linked (GlcNAc...) asparagine glycosylation is present at N316. A helical membrane pass occupies residues 495-515; the sequence is IGFLLACVASAILLVTKCCLF. The Cytoplasmic portion of the chain corresponds to 516–530; that stretch reads SFQNFIKIGKRIKKE.

Belongs to the UDP-glycosyltransferase family. In terms of tissue distribution, specifically expressed in liver and small intestine.

The protein localises to the membrane. The enzyme catalyses glucuronate acceptor + UDP-alpha-D-glucuronate = acceptor beta-D-glucuronoside + UDP + H(+). UDP-glucuronosyltransferases catalyze phase II biotransformation reactions in which lipophilic substrates are conjugated with glucuronic acid to increase water solubility and enhance excretion. They are of major importance in the conjugation and subsequent elimination of potentially toxic xenobiotics and endogenous compounds. The protein is UDP-glucuronosyltransferase 2A3 (UGT2A3) of Cavia porcellus (Guinea pig).